The primary structure comprises 247 residues: Ribosomal RNA small subunit methyltransferase J (247 aa).

Residues 106-107 (RD), 122-123 (ER), and aspartate 168 each bind S-adenosyl-L-methionine.

Belongs to the methyltransferase superfamily. RsmJ family.

It localises to the cytoplasm. It catalyses the reaction guanosine(1516) in 16S rRNA + S-adenosyl-L-methionine = N(2)-methylguanosine(1516) in 16S rRNA + S-adenosyl-L-homocysteine + H(+). Specifically methylates the guanosine in position 1516 of 16S rRNA. This chain is Ribosomal RNA small subunit methyltransferase J, found in Alcanivorax borkumensis (strain ATCC 700651 / DSM 11573 / NCIMB 13689 / SK2).